The chain runs to 593 residues: NADH-quinone oxidoreductase subunit C/D (593 aa).

The interval Met-1–Gln-184 is NADH dehydrogenase I subunit C. The segment at Asp-208 to Arg-593 is NADH dehydrogenase I subunit D.

In the N-terminal section; belongs to the complex I 30 kDa subunit family. This sequence in the C-terminal section; belongs to the complex I 49 kDa subunit family. In terms of assembly, NDH-1 is composed of 13 different subunits. Subunits NuoB, CD, E, F, and G constitute the peripheral sector of the complex.

It localises to the cell inner membrane. The catalysed reaction is a quinone + NADH + 5 H(+)(in) = a quinol + NAD(+) + 4 H(+)(out). Functionally, NDH-1 shuttles electrons from NADH, via FMN and iron-sulfur (Fe-S) centers, to quinones in the respiratory chain. The immediate electron acceptor for the enzyme in this species is believed to be ubiquinone. Couples the redox reaction to proton translocation (for every two electrons transferred, four hydrogen ions are translocated across the cytoplasmic membrane), and thus conserves the redox energy in a proton gradient. The protein is NADH-quinone oxidoreductase subunit C/D of Pseudomonas paraeruginosa (strain DSM 24068 / PA7) (Pseudomonas aeruginosa (strain PA7)).